Consider the following 178-residue polypeptide: Deoxycytidylate deaminase (178 aa).

The CMP/dCMP-type deaminase domain occupies glutamate 14–phenylalanine 145. Histidine 84 lines the Zn(2+) pocket. Catalysis depends on glutamate 86, which acts as the Proton donor. Zn(2+)-binding residues include cysteine 110 and cysteine 113. Residue serine 174 is modified to Phosphoserine.

Belongs to the cytidine and deoxycytidylate deaminase family. As to quaternary structure, homohexamer. Requires Zn(2+) as cofactor.

The enzyme catalyses dCMP + H2O + H(+) = dUMP + NH4(+). It catalyses the reaction 5-hydroxymethyl-dCMP + H2O + H(+) = 5-hydroxymethyl-dUMP + NH4(+). With respect to regulation, allosteric enzyme whose activity is greatly influenced by the end products of its metabolic pathway, dCTP and dTTP. Functionally, catalyzes the deamination of dCMP to dUMP, providing the nucleoside monophosphate substrate for the thymidylate synthase/TYMS. Also, part of a nucleotide salvage pathway that eliminates epigenetically modified 5-hydroxymethyl-dCMP (hmdCMP) in a two-step process entailing deamination to cytotoxic 5-hydroxymethyl-dUMP (hmdUMP), followed by its hydrolysis into 5-hydroxymethyluracil (hmU) and 2-deoxy-D-ribose 5-phosphate (deoxyribosephosphate). Catalyzes the first step in that pathway, the deamination of 5-hydroxymethyl-dCMP (hmdCMP). This is Deoxycytidylate deaminase from Mus musculus (Mouse).